Here is a 375-residue protein sequence, read N- to C-terminus: Peptide chain release factor 1 (375 aa).

Position 237 is an N5-methylglutamine (Q237). A compositionally biased stretch (basic and acidic residues) spans 289-299; the sequence is AAREAQERQER. The interval 289–326 is disordered; the sequence is AAREAQERQERASQVGSGDRSEKIRTYNYPQNRVTDHR.

The protein belongs to the prokaryotic/mitochondrial release factor family. Post-translationally, methylated by PrmC. Methylation increases the termination efficiency of RF1.

The protein localises to the cytoplasm. Functionally, peptide chain release factor 1 directs the termination of translation in response to the peptide chain termination codons UAG and UAA. The sequence is that of Peptide chain release factor 1 (prfA) from Deinococcus radiodurans (strain ATCC 13939 / DSM 20539 / JCM 16871 / CCUG 27074 / LMG 4051 / NBRC 15346 / NCIMB 9279 / VKM B-1422 / R1).